The following is a 607-amino-acid chain: Elongation factor 4 (607 aa).

The tr-type G domain maps to 11–193 (ENIRNFSIIA…KIVDVVPAPD (183 aa)). Residues 23 to 28 (DHGKST) and 140 to 143 (NKID) each bind GTP.

This sequence belongs to the TRAFAC class translation factor GTPase superfamily. Classic translation factor GTPase family. LepA subfamily.

It localises to the cell membrane. It carries out the reaction GTP + H2O = GDP + phosphate + H(+). Its function is as follows. Required for accurate and efficient protein synthesis under certain stress conditions. May act as a fidelity factor of the translation reaction, by catalyzing a one-codon backward translocation of tRNAs on improperly translocated ribosomes. Back-translocation proceeds from a post-translocation (POST) complex to a pre-translocation (PRE) complex, thus giving elongation factor G a second chance to translocate the tRNAs correctly. Binds to ribosomes in a GTP-dependent manner. In Staphylococcus epidermidis (strain ATCC 35984 / DSM 28319 / BCRC 17069 / CCUG 31568 / BM 3577 / RP62A), this protein is Elongation factor 4.